The following is a 129-amino-acid chain: Small ribosomal subunit protein uS8 (129 aa).

It belongs to the universal ribosomal protein uS8 family. As to quaternary structure, part of the 30S ribosomal subunit.

Functionally, one of the primary rRNA binding proteins, it binds directly to 16S rRNA central domain where it helps coordinate assembly of the platform of the 30S subunit. In Methanothrix thermoacetophila (strain DSM 6194 / JCM 14653 / NBRC 101360 / PT) (Methanosaeta thermophila), this protein is Small ribosomal subunit protein uS8.